Reading from the N-terminus, the 408-residue chain is Subtilisin-like protease 6 (408 aa).

A signal peptide spans 1 to 20; it reads MGFITKAIPIVLAALSTVDG. The propeptide occupies 21–123; it reads AKILEAGPHA…RDTVVKATAI (103 aa). The 84-residue stretch at 36–119 folds into the Inhibitor I9 domain; that stretch reads KYIVVMKQDV…DFIERDTVVK (84 aa). In terms of domain architecture, Peptidase S8 spans 131-408; sequence SWGLARVGSK…GKLIYNGSGK (278 aa). Catalysis depends on charge relay system residues aspartate 163 and histidine 194. Residues asparagine 248, asparagine 260, and asparagine 345 are each glycosylated (N-linked (GlcNAc...) asparagine). Serine 354 acts as the Charge relay system in catalysis. An N-linked (GlcNAc...) asparagine glycan is attached at asparagine 404.

It belongs to the peptidase S8 family.

The protein localises to the secreted. In terms of biological role, secreted subtilisin-like serine protease with keratinolytic activity that contributes to pathogenicity. The sequence is that of Subtilisin-like protease 6 (SUB6) from Arthroderma gypseum (strain ATCC MYA-4604 / CBS 118893) (Microsporum gypseum).